Here is a 253-residue protein sequence, read N- to C-terminus: E3 ubiquitin-protein ligase MARCHF3 (253 aa).

The segment at S63 to E123 adopts an RING-CH-type zinc-finger fold. Positions 71, 74, 87, 89, 97, 100, 113, and 116 each coordinate Zn(2+). The next 2 membrane-spanning stretches (helical) occupy residues L145–L165 and A182–V202. Phosphoserine occurs at positions 237 and 243.

In terms of assembly, interacts with MARCHF2 and STX6. In terms of tissue distribution, expressed predominantly in lung, colon and spleen. Present in liver (at protein level).

The protein resides in the cytoplasmic vesicle membrane. Its subcellular location is the early endosome membrane. The enzyme catalyses S-ubiquitinyl-[E2 ubiquitin-conjugating enzyme]-L-cysteine + [acceptor protein]-L-lysine = [E2 ubiquitin-conjugating enzyme]-L-cysteine + N(6)-ubiquitinyl-[acceptor protein]-L-lysine.. Its pathway is protein modification; protein ubiquitination. Functionally, E3 ubiquitin-protein ligase which may be involved in endosomal trafficking. E3 ubiquitin ligases accept ubiquitin from an E2 ubiquitin-conjugating enzyme in the form of a thioester and then directly transfer the ubiquitin to targeted substrates. The chain is E3 ubiquitin-protein ligase MARCHF3 (Marchf3) from Rattus norvegicus (Rat).